A 379-amino-acid chain; its full sequence is Queuine tRNA-ribosyltransferase (379 aa).

Asp-94 (proton acceptor) is an active-site residue. Substrate-binding positions include Asp-94–Phe-98, Asp-148, Gln-191, and Gly-218. The tract at residues Gly-249 to Ser-255 is RNA binding. The Nucleophile role is filled by Asp-268. Residues Thr-273–Arg-277 form an RNA binding; important for wobble base 34 recognition region. Positions 306, 308, 311, and 337 each coordinate Zn(2+).

The protein belongs to the queuine tRNA-ribosyltransferase family. As to quaternary structure, homodimer. Within each dimer, one monomer is responsible for RNA recognition and catalysis, while the other monomer binds to the replacement base PreQ1. Requires Zn(2+) as cofactor.

The catalysed reaction is 7-aminomethyl-7-carbaguanine + guanosine(34) in tRNA = 7-aminomethyl-7-carbaguanosine(34) in tRNA + guanine. The protein operates within tRNA modification; tRNA-queuosine biosynthesis. Functionally, catalyzes the base-exchange of a guanine (G) residue with the queuine precursor 7-aminomethyl-7-deazaguanine (PreQ1) at position 34 (anticodon wobble position) in tRNAs with GU(N) anticodons (tRNA-Asp, -Asn, -His and -Tyr). Catalysis occurs through a double-displacement mechanism. The nucleophile active site attacks the C1' of nucleotide 34 to detach the guanine base from the RNA, forming a covalent enzyme-RNA intermediate. The proton acceptor active site deprotonates the incoming PreQ1, allowing a nucleophilic attack on the C1' of the ribose to form the product. After dissociation, two additional enzymatic reactions on the tRNA convert PreQ1 to queuine (Q), resulting in the hypermodified nucleoside queuosine (7-(((4,5-cis-dihydroxy-2-cyclopenten-1-yl)amino)methyl)-7-deazaguanosine). In Bacillus cereus (strain Q1), this protein is Queuine tRNA-ribosyltransferase.